The following is a 255-amino-acid chain: F-box/SPRY domain-containing protein 1 (255 aa).

In terms of domain architecture, F-box spans 3 to 51; that stretch reads DPVAALCNFNVLEVIFSYLDLNDLSRCSQVCRSWHHFLNDENSDVWRWH. The region spanning 61 to 253 is the B30.2/SPRY domain; that stretch reads MKSDLLTSVS…VSMVYLGTPL (193 aa).

It belongs to the FBXO45/Fsn family. Component of an E3 ubiquitin ligase complex composed of hiw and Fsn.

Its subcellular location is the synapse. The protein operates within protein modification; protein ubiquitination. In terms of biological role, required in the presynaptic motoneuron to down-regulate the levels of wnd and restrain synaptic terminal growth at the neuromuscular junction (NMJ). The polypeptide is F-box/SPRY domain-containing protein 1 (Drosophila willistoni (Fruit fly)).